A 232-amino-acid polypeptide reads, in one-letter code: Orotidine 5'-phosphate decarboxylase (232 aa).

Substrate is bound by residues aspartate 13, lysine 35, 62 to 71 (DLKFHDIPNT), threonine 121, arginine 182, glutamine 191, glycine 211, and arginine 212. Lysine 64 (proton donor) is an active-site residue.

The protein belongs to the OMP decarboxylase family. Type 1 subfamily. As to quaternary structure, homodimer.

It carries out the reaction orotidine 5'-phosphate + H(+) = UMP + CO2. The protein operates within pyrimidine metabolism; UMP biosynthesis via de novo pathway; UMP from orotate: step 2/2. Catalyzes the decarboxylation of orotidine 5'-monophosphate (OMP) to uridine 5'-monophosphate (UMP). In Acinetobacter baumannii (strain AB0057), this protein is Orotidine 5'-phosphate decarboxylase.